We begin with the raw amino-acid sequence, 310 residues long: Nuclear hormone receptor family member nhr-89 (310 aa).

The segment at residues 5–79 (EGPCRVCHSV…SGMRRDCVRK (75 aa)) is a DNA-binding region (nuclear receptor). 2 consecutive NR C4-type zinc fingers follow at residues 8–29 (CRVC…CMSC) and 43–67 (CPAN…YNKC). Residues 101 to 310 (KLSESYEELL…TLHQKYQIPF (210 aa)) form the NR LBD domain.

The protein belongs to the nuclear hormone receptor family.

It localises to the nucleus. Its function is as follows. Orphan nuclear receptor. The sequence is that of Nuclear hormone receptor family member nhr-89 (nhr-89) from Caenorhabditis elegans.